The following is a 925-amino-acid chain: Neuropilin-2 (925 aa).

The first 22 residues, 1–22, serve as a signal peptide directing secretion; it reads MDMFPLTWIFLALYFSGHKVRS. At 23–858 the chain is on the extracellular side; that stretch reads QQDPPCGGRL…EKSWLYTLDP (836 aa). Disulfide bonds link Cys28-Cys55, Cys83-Cys105, and Cys149-Cys175. 2 consecutive CUB domains span residues 28–142 and 149–267; these read CGGR…YEIF and CSKN…YYLV. Asn152 and Asn157 each carry an N-linked (GlcNAc...) asparagine glycan. Ca(2+)-binding residues include Glu197, Asp211, and Asp252. Cys208 and Cys230 are joined by a disulfide. 2 cysteine pairs are disulfide-bonded: Cys277–Cys427 and Cys434–Cys592. 2 F5/8 type C domains span residues 277–427 and 434–592; these read CNAP…LFGC and CSNM…VLGC. Residues 297 to 310 are compositionally biased toward polar residues; the sequence is STFSDGRWTPQQSR. The disordered stretch occupies residues 297-317; sequence STFSDGRWTPQQSRLHGDDNG. Residues 601 to 621 are disordered; that stretch reads VETLGPTVKSEETTTPYPMDE. Asn629 carries N-linked (GlcNAc...) asparagine glycosylation. One can recognise an MAM domain in the interval 642-802; it reads SGFNCNFDFP…TDVPLENCME (161 aa). Positions 820–830 are enriched in acidic residues; it reads YEDEIDDDYEG. The segment at 820–849 is disordered; it reads YEDEIDDDYEGDWNNSSSTSGAGSPSSGKE. Residues Asn833 and Asn834 are each glycosylated (N-linked (GlcNAc...) asparagine). A compositionally biased stretch (low complexity) spans 835–846; that stretch reads SSSTSGAGSPSS. A helical membrane pass occupies residues 859–883; that stretch reads ILITIIAMSSLGVLLGATCAGLLLY. Residues 884–925 are Cytoplasmic-facing; that stretch reads CTCSYSGLSSRSCTTLENYNFELYDGLKHKVKINHQKCCSEA.

This sequence belongs to the neuropilin family. Heterodimer with NRP1. Binds PLXNB1. In terms of tissue distribution, found in certain neuronal populations of the CNS, including dorsal root ganglia, and in other non-neuronal tissues including mesenchymal tissue lining in the ribs.

The protein localises to the membrane. Functionally, high affinity receptor for semaphorins 3C, 3F, VEGF-165 and VEGF-145 isoforms of VEGF, and the PLGF-2 isoform of PGF. This Rattus norvegicus (Rat) protein is Neuropilin-2 (Nrp2).